The primary structure comprises 476 residues: Glycogen synthase (476 aa).

An ADP-alpha-D-glucose-binding site is contributed by Lys-15.

Belongs to the glycosyltransferase 1 family. Bacterial/plant glycogen synthase subfamily.

It carries out the reaction [(1-&gt;4)-alpha-D-glucosyl](n) + ADP-alpha-D-glucose = [(1-&gt;4)-alpha-D-glucosyl](n+1) + ADP + H(+). The protein operates within glycan biosynthesis; glycogen biosynthesis. Functionally, synthesizes alpha-1,4-glucan chains using ADP-glucose. The chain is Glycogen synthase from Bacillus cereus (strain Q1).